Here is a 179-residue protein sequence, read N- to C-terminus: Large ribosomal subunit protein uL6 (179 aa).

It belongs to the universal ribosomal protein uL6 family. As to quaternary structure, part of the 50S ribosomal subunit.

In terms of biological role, this protein binds to the 23S rRNA, and is important in its secondary structure. It is located near the subunit interface in the base of the L7/L12 stalk, and near the tRNA binding site of the peptidyltransferase center. The polypeptide is Large ribosomal subunit protein uL6 (Bacillus velezensis (strain DSM 23117 / BGSC 10A6 / LMG 26770 / FZB42) (Bacillus amyloliquefaciens subsp. plantarum)).